Consider the following 863-residue polypeptide: MEGEGGGSGGAGTSGDSGDGGEQLLTVKHELRTANLTGHAEKVGIENFELLKVLGTGAYGKVFLVRKISGHDAGKLYAMKVLKKATIVQKAKTTEHTRTERQVLEHIRQSPFLVTLHYAFQTETKLHLILDYINGGELFTHLSQRERFTEHEVQIYVGEIVLALEHLHKLGIIYRDIKLENILLDSNGHVVLTDFGLSKEFVADETERAYSFCGTIEYMAPDIVRGGDSGHDKAVDWWSLGVLMYELLTGASPFTVDGEKNSQAEISRRILKSEPPYPQEMSTVAKDLLQRLLMKDPKKRLGCGPRDAEEIKEHLFFEKIKWDDLAAKKVPAPFKPVIRDELDVSNFAEEFTEMDPTYSPAALPQSSERLFQGYSFVAPSILFKRNAAVIDPLQFHMGVDRPGVTNVARSAMMKDSPFYQHYDLDLKDKPLGEGSFSICRKCVHKKTNQAFAVKIISKRMEANTQKEITALKLCEGHPNIVKLHEVFHDQVAASAQPPGQVVLCSLLLLALLFNRSLTRKPVTWTWLVHSTSQLPPLPPPMPEIVLFILLSDNGQLHTFLVMELLNGGELFERIKRKKHFSETEASYIMRKLVSAVSHMHDVGVVHRDLKPENLLFTDENDNLEIKVIDFGFARLKPPDNQPLKTPCFTLHYAAPELLTHNGYDESCDLWSLGVILYTMLSGQVPFQSHDRSLTCTSAVEIMKKIKKGDFSFEGEAWKNVSQEAKDLIQGLLTVDPNKRLKMSGLRYNEWLQDGSQLSSNPLMTPDILGSSGAAVHTCVKATFHAFNKYKREGFCLQNVDKAPLAKRRKMKRTSTSTETRSSSSESSRSSSSQSHGKTTPTKTLQPSNPTEGSNPDTLFQFSD.

Positions 1–21 (MEGEGGGSGGAGTSGDSGDGG) are enriched in gly residues. A disordered region spans residues 1 to 22 (MEGEGGGSGGAGTSGDSGDGGE). The Protein kinase 1 domain maps to 48–317 (FELLKVLGTG…AEEIKEHLFF (270 aa)). Residues 54–62 (LGTGAYGKV) and lysine 80 each bind ATP. Catalysis depends on aspartate 176, which acts as the Proton acceptor. At serine 211 the chain carries Phosphoserine; by autocatalysis. Residues 318–386 (EKIKWDDLAA…VAPSILFKRN (69 aa)) form the AGC-kinase C-terminal domain. A Phosphoserine; by MAPK1, MAPK3 and MAPK14 modification is found at serine 359. Serine 375 and serine 380 each carry phosphoserine; by autocatalysis. The Protein kinase 2 domain occupies 428–675 (DKPLGEGSFS…SCDLWSLGVI (248 aa)). ATP-binding positions include 431–440 (LGEGSFSICR) and lysine 454. The active-site Proton acceptor is aspartate 608. The residue at position 645 (threonine 645) is a Phosphothreonine; by MAPK1, MAPK3 and MAPK14. Serine 711, serine 721, serine 755, and serine 759 each carry phosphoserine. Threonine 764 is modified (phosphothreonine). Residues 805 to 863 (AKRRKMKRTSTSTETRSSSSESSRSSSSQSHGKTTPTKTLQPSNPTEGSNPDTLFQFSD) are disordered. Residues 813-832 (TSTSTETRSSSSESSRSSSS) show a composition bias toward low complexity. Residues serine 814, serine 816, and serine 822 each carry the phosphoserine; by autocatalysis modification. The span at 833 to 863 (QSHGKTTPTKTLQPSNPTEGSNPDTLFQFSD) shows a compositional bias: polar residues. Serine 862 bears the Phosphoserine mark.

It belongs to the protein kinase superfamily. AGC Ser/Thr protein kinase family. S6 kinase subfamily. As to quaternary structure, forms a complex with either MAPK1/ERK2 or MAPK3/ERK1 in quiescent cells which transiently dissociates following mitogenic stimulation. Also associates with MAPK14/p38-alpha. Activated RPS6KA5 associates with and phosphorylates the NF-kappa-B p65 subunit RELA. Interacts with CREBBP and EP300. Requires Mg(2+) as cofactor. Ser-375 and Thr-645 phosphorylation is required for kinase activity. Ser-375 and Ser-211 are autophosphorylated by the C-terminal kinase domain, and their phosphorylation is essential for the catalytic activity of the N-terminal kinase domain. Phosphorylated at Ser-359, Thr-645 and Thr-764 by MAPK1/ERK2, MAPK3/ERK1 and MAPK14/p38-alpha. Autophosphorylated at Ser-814, Ser-816 and Ser-822 by the N-terminal kinase domain. Post-translationally, ubiquitinated.

It localises to the nucleus. The catalysed reaction is L-seryl-[protein] + ATP = O-phospho-L-seryl-[protein] + ADP + H(+). The enzyme catalyses L-threonyl-[protein] + ATP = O-phospho-L-threonyl-[protein] + ADP + H(+). Its activity is regulated as follows. Activated by phosphorylation at Ser-359, Thr-645 and Thr-764 by MAPK1/ERK2, MAPK3/ERK1 and MAPK14/p38-alpha, and by further autophosphorylation of Ser-211, Ser-375 and Ser-380 by the activated C-terminal kinase domain. The active N-terminal kinase domain finally phosphorylates downstream substrates, as well as Ser-814, Ser-816 and Ser-822 in its own C-terminal region. Serine/threonine-protein kinase that is required for the mitogen or stress-induced phosphorylation of the transcription factors CREB1 and ATF1 and for the regulation of the transcription factors RELA, STAT3 and ETV1/ER81, and that contributes to gene activation by histone phosphorylation and functions in the regulation of inflammatory genes. Phosphorylates CREB1 and ATF1 in response to mitogenic or stress stimuli such as UV-C irradiation, epidermal growth factor (EGF) and anisomycin. Plays an essential role in the control of RELA transcriptional activity in response to TNF and upon glucocorticoid, associates in the cytoplasm with the glucocorticoid receptor NR3C1 and contributes to RELA inhibition and repression of inflammatory gene expression. In skeletal myoblasts is required for phosphorylation of RELA at 'Ser-276' during oxidative stress. In erythropoietin-stimulated cells, is necessary for the 'Ser-727' phosphorylation of STAT3 and regulation of its transcriptional potential. Phosphorylates ETV1/ER81 at 'Ser-191' and 'Ser-216', and thereby regulates its ability to stimulate transcription, which may be important during development and breast tumor formation. Directly represses transcription via phosphorylation of 'Ser-1' of histone H2A. Phosphorylates 'Ser-10' of histone H3 in response to mitogenics, stress stimuli and EGF, which results in the transcriptional activation of several immediate early genes, including proto-oncogenes c-fos/FOS and c-jun/JUN. May also phosphorylate 'Ser-28' of histone H3. Mediates the mitogen- and stress-induced phosphorylation of high mobility group protein 1 (HMGN1/HMG14). In lipopolysaccharide-stimulated primary macrophages, acts downstream of the Toll-like receptor TLR4 to limit the production of pro-inflammatory cytokines. Functions probably by inducing transcription of the MAP kinase phosphatase DUSP1 and the anti-inflammatory cytokine interleukin 10 (IL10), via CREB1 and ATF1 transcription factors. Plays a role in neuronal cell death by mediating the downstream effects of excitotoxic injury. Phosphorylates TRIM7 at 'Ser-106' in response to growth factor signaling via the MEK/ERK pathway, thereby stimulating its ubiquitin ligase activity. In Mus musculus (Mouse), this protein is Ribosomal protein S6 kinase alpha-5 (Rps6ka5).